A 294-amino-acid polypeptide reads, in one-letter code: ATP synthase gamma chain (294 aa).

The protein belongs to the ATPase gamma chain family. As to quaternary structure, F-type ATPases have 2 components, CF(1) - the catalytic core - and CF(0) - the membrane proton channel. CF(1) has five subunits: alpha(3), beta(3), gamma(1), delta(1), epsilon(1). CF(0) has three main subunits: a, b and c.

It localises to the cell inner membrane. In terms of biological role, produces ATP from ADP in the presence of a proton gradient across the membrane. The gamma chain is believed to be important in regulating ATPase activity and the flow of protons through the CF(0) complex. In Mesorhizobium japonicum (strain LMG 29417 / CECT 9101 / MAFF 303099) (Mesorhizobium loti (strain MAFF 303099)), this protein is ATP synthase gamma chain.